Consider the following 291-residue polypeptide: Phosphoribulokinase (291 aa).

Residue 12–20 participates in ATP binding; sequence GSSGAGTTS.

Belongs to the phosphoribulokinase family. As to quaternary structure, homooctamer.

It carries out the reaction D-ribulose 5-phosphate + ATP = D-ribulose 1,5-bisphosphate + ADP + H(+). Its pathway is carbohydrate biosynthesis; Calvin cycle. In Xanthobacter flavus, this protein is Phosphoribulokinase (cbbP).